Here is a 556-residue protein sequence, read N- to C-terminus: Formate--tetrahydrofolate ligase (556 aa).

ATP is bound at residue 65 to 72 (TSAGEGKT).

Belongs to the formate--tetrahydrofolate ligase family.

It catalyses the reaction (6S)-5,6,7,8-tetrahydrofolate + formate + ATP = (6R)-10-formyltetrahydrofolate + ADP + phosphate. Its pathway is one-carbon metabolism; tetrahydrofolate interconversion. The chain is Formate--tetrahydrofolate ligase from Kosmotoga olearia (strain ATCC BAA-1733 / DSM 21960 / TBF 19.5.1).